A 302-amino-acid chain; its full sequence is UDP-N-acetylenolpyruvoylglucosamine reductase (302 aa).

One can recognise an FAD-binding PCMH-type domain in the interval 29-192 (KVGGPVDLLA…VAVTLQLSED (164 aa)). R172 is a catalytic residue. Residue S221 is the Proton donor of the active site. E291 is an active-site residue.

It belongs to the MurB family. FAD is required as a cofactor.

Its subcellular location is the cytoplasm. It carries out the reaction UDP-N-acetyl-alpha-D-muramate + NADP(+) = UDP-N-acetyl-3-O-(1-carboxyvinyl)-alpha-D-glucosamine + NADPH + H(+). The protein operates within cell wall biogenesis; peptidoglycan biosynthesis. Cell wall formation. In Trichlorobacter lovleyi (strain ATCC BAA-1151 / DSM 17278 / SZ) (Geobacter lovleyi), this protein is UDP-N-acetylenolpyruvoylglucosamine reductase.